Reading from the N-terminus, the 492-residue chain is Bifunctional protein GlmU (492 aa).

A pyrophosphorylase region spans residues M1–R241. UDP-N-acetyl-alpha-D-glucosamine contacts are provided by residues L14–G17, K28, Q81, G86–T87, Y112–D114, G151, E166, N181, and N239. Residue D114 participates in Mg(2+) binding. N239 is a Mg(2+) binding site. The segment at V242–A262 is linker. The N-acetyltransferase stretch occupies residues G263–K492. Residues R344 and K362 each contribute to the UDP-N-acetyl-alpha-D-glucosamine site. H374 acts as the Proton acceptor in catalysis. UDP-N-acetyl-alpha-D-glucosamine is bound by residues Y377 and N388. Acetyl-CoA is bound by residues N397–Y398, S416, and A434. Residues W460 to K492 form a disordered region. Residues A477 to K492 are compositionally biased toward polar residues.

This sequence in the N-terminal section; belongs to the N-acetylglucosamine-1-phosphate uridyltransferase family. The protein in the C-terminal section; belongs to the transferase hexapeptide repeat family. Homotrimer. It depends on Mg(2+) as a cofactor.

Its subcellular location is the cytoplasm. It catalyses the reaction alpha-D-glucosamine 1-phosphate + acetyl-CoA = N-acetyl-alpha-D-glucosamine 1-phosphate + CoA + H(+). The catalysed reaction is N-acetyl-alpha-D-glucosamine 1-phosphate + UTP + H(+) = UDP-N-acetyl-alpha-D-glucosamine + diphosphate. Its pathway is nucleotide-sugar biosynthesis; UDP-N-acetyl-alpha-D-glucosamine biosynthesis; N-acetyl-alpha-D-glucosamine 1-phosphate from alpha-D-glucosamine 6-phosphate (route II): step 2/2. It functions in the pathway nucleotide-sugar biosynthesis; UDP-N-acetyl-alpha-D-glucosamine biosynthesis; UDP-N-acetyl-alpha-D-glucosamine from N-acetyl-alpha-D-glucosamine 1-phosphate: step 1/1. It participates in bacterial outer membrane biogenesis; LPS lipid A biosynthesis. Its function is as follows. Catalyzes the last two sequential reactions in the de novo biosynthetic pathway for UDP-N-acetylglucosamine (UDP-GlcNAc). The C-terminal domain catalyzes the transfer of acetyl group from acetyl coenzyme A to glucosamine-1-phosphate (GlcN-1-P) to produce N-acetylglucosamine-1-phosphate (GlcNAc-1-P), which is converted into UDP-GlcNAc by the transfer of uridine 5-monophosphate (from uridine 5-triphosphate), a reaction catalyzed by the N-terminal domain. The sequence is that of Bifunctional protein GlmU from Pseudarthrobacter chlorophenolicus (strain ATCC 700700 / DSM 12829 / CIP 107037 / JCM 12360 / KCTC 9906 / NCIMB 13794 / A6) (Arthrobacter chlorophenolicus).